The primary structure comprises 219 residues: Transmembrane emp24 domain-containing protein 10 (219 aa).

A signal peptide spans 1–31; it reads MSGWSGPLARRGPGPLALLFLFLLGPSSVLA. The segment at 1-142 is required for interaction with STX17; the sequence is MSGWSGPLAR…KNYEEIAKVE (142 aa). Topologically, residues 32–185 are lumenal; sequence ISFHLPVNSR…RDTNESTNTR (154 aa). The 153-residue stretch at 41–193 folds into the GOLD domain; sequence RKCLREEIHK…TRVLYFSIFS (153 aa). Positions 147–178 are required for TMED10 and TMED2 cis-Golgi network localization; that stretch reads LEVELRRLEDLSESIVNDFAYMKKREEEMRDT. R171 and R176 each carry dimethylated arginine. N-linked (GlcNAc...) asparagine glycosylation is present at N179. Residues 186–206 form a helical membrane-spanning segment; it reads VLYFSIFSMFCLIGLATWQVF. Residues 204–219 form an interaction with COPG1 region; it reads QVFYLRRFFKAKKLIE. The Cytoplasmic portion of the chain corresponds to 207–219; it reads YLRRFFKAKKLIE. The segment at 207–219 is interaction with ARF1 and IL1B; that stretch reads YLRRFFKAKKLIE. Positions 211 to 212 match the COPII vesicle coat-binding motif; it reads FF. The COPI vesicle coat-binding motif lies at 211–219; sequence FFKAKKLIE.

Belongs to the EMP24/GP25L family. Predominantly dimeric and to a lesser extent monomeric in the ER. Monomer and dimer in ERGIC and cis-Golgi network. Forms homooligomer (via GOLD domain); the assembly is promoted by direct binding with leaderless cargos and may form a protein channel that facilitates cargo entry into the ERGIC. Forms heterooligomeric complexes with other members of the p24 family such as TMED2, TMED7 and TMED9. Interacts (via GOLD domain) with TMED2 (via GOLD domain); the complex is required for export of TMED10 from the ER to the cis-Golgi network; the complex is proposed to be involved in cis-Golgi network dynamics and / or biogenesis. Associates with the COPI vesicle coat subunits (coatomer). Tetramerization of the cytoplasmic domain at the Golgi membrane in vitro; the complex is proposed to interact with COPI coatomer and induce budding of the vesicles. Interacts with COPG1; the interaction involves TMED10 homodimer. Interacts with ARF1 (GDP-bound); the interaction probably involves a TMED10 oligomer. Interacts with SEC23A, SEC24B, SEC24C and SEC24D components of the coat protein complex II/COPII, indicative of an association of TMED10 with the COPII vesicle coat. Interacts with CD59. Interacts with MPPE1/PGAP5; the complex might recruit and sort GPI-anchored proteins to the ER-exit site, or the interaction might lead to recycling of PGAP5 between the ER and the Golgi. Interacts with F2LR1/PAR2. Interacts with KDELR2/ERD2; the interaction is disrupted by KDELR2 ligand. Found in a complex composed at least of SURF4, TMED2 and TMED10. Associates with the presenilin-dependent gamma-secretase complex. Interacts with STX17; the interaction is direct. Interacts with IL-1; the interaction is direct. Interacts with RAB21 (active GTP-bound form); the interaction is indirect and regulates TMED10 abundance and localization at the Golgi.

It localises to the endoplasmic reticulum membrane. Its subcellular location is the endoplasmic reticulum-Golgi intermediate compartment membrane. It is found in the golgi apparatus membrane. The protein localises to the golgi apparatus. The protein resides in the cis-Golgi network membrane. It localises to the trans-Golgi network membrane. Its subcellular location is the cytoplasmic vesicle. It is found in the secretory vesicle membrane. The protein localises to the cell membrane. The protein resides in the melanosome. Functionally, cargo receptor involved in protein vesicular trafficking and quality control in the endoplasmic reticulum (ER) and Golgi. The p24 protein family is a group of transmembrane proteins that bind coat protein complex I/COPI and coat protein complex II/COPII involved in vesicular trafficking between the membranes. Acts at the lumenal side for incorporation of secretory cargo molecules into transport vesicles and involved in vesicle coat formation at the cytoplasmic side. Mainly functions in the early secretory pathway and cycles between the ER, ER-Golgi intermediate compartment (ERGIC) and Golgi, mediating cargo transport through COPI and COPII-coated vesicles. In COPII vesicle-mediated anterograde transport, involved in the transport of GPI-anchored proteins by acting together with TMED2 as their cargo receptor; the function specifically implies SEC24C and SEC24D of the COPII vesicle coat and lipid raft-like microdomains of the ER. Recognizes GPI anchors structural remodeled in the ER by the GPI inositol-deacylase/PGAP1 and the metallophosphoesterase MPPE1/PGAP5. In COPI vesicle-mediated retrograde transport, involved in the biogenesis of COPI vesicles and vesicle coat recruitment. Involved in trafficking of amyloid beta A4 protein and soluble APP-beta release (independent from the modulation of gamma-secretase activity). Involved in the KDELR2-mediated retrograde transport of the toxin A subunit (CTX-A-K63)together with COPI and the COOH terminus of KDELR2. On Golgi membranes, acts as a primary receptor for ARF1-GDP, a GTP-binding protein involved in COPI-vesicle formation. Increases coatomer-dependent GTPase-activating activity of ARFGAP2 which mediates the hydrolysis of ARF1-bound GTP and therefore modulates protein trafficking from the Golgi apparatus. Involved in the exocytic trafficking of G protein-coupled receptors F2LR1/PAR2 (trypsin and tryspin-like enzyme receptor), OPRM1 (opioid receptor) and P2RY4 (UTD and UDP receptor) from the Golgi to the plasma membrane, thus contributing to receptor resensitization. In addition to its cargo receptor activity, may also act as a protein channel after oligomerization, facilitating the post-translational entry of leaderless cytoplasmic cargo into the ERGIC. Involved in the translocation into ERGIC, the vesicle entry and the secretion of leaderless cargos (lacking the secretion signal sequence), including the mature form of interleukin 1/IL-1 family members, the alpha-crystallin B chain HSPB5, the carbohydrate-binding proteins galectin-1/LGALS1 and galectin-3/LGALS3, the microtubule-associated protein Tau/MAPT, and the annexin A1/ANXA1; the translocation process is dependent on cargo protein unfolding and enhanced by chaperones HSP90AB1 and HSP90B1/GRP9. Could also associates with the presenilin-dependent gamma-secretase complex in order to regulate gamma-cleavages of the amyloid beta A4 protein to yield amyloid-beta 40/Abeta40. In Oryctolagus cuniculus (Rabbit), this protein is Transmembrane emp24 domain-containing protein 10 (TMED10).